The primary structure comprises 133 residues: CDGSH iron-sulfur domain-containing protein 2 homolog (133 aa).

The Lumenal portion of the chain corresponds to 1–35 (MQSVSQVVKTSLPNYLSSLPVPDTFGGWFKLSFKD). Residues 36 to 58 (WLALIPPTAVVVGIGYVTYRAFY) form a helical membrane-spanning segment. At 59–133 (PKAHRTCKSG…NVGPIVIKKK (75 aa)) the chain is on the cytoplasmic side. Positions 99, 101, 110, and 114 each coordinate [2Fe-2S] cluster.

Belongs to the CISD protein family. CISD2 subfamily. The cofactor is [2Fe-2S] cluster.

The protein localises to the endoplasmic reticulum membrane. This chain is CDGSH iron-sulfur domain-containing protein 2 homolog, found in Drosophila virilis (Fruit fly).